We begin with the raw amino-acid sequence, 534 residues long: Calcium-dependent protein kinase 29 (534 aa).

A disordered region spans residues 1–72; sequence MGFCFSKFGK…STSSGSQIGP (72 aa). G2 is lipidated: N-myristoyl glycine. Over residues 16-27 the composition is skewed to low complexity; the sequence is IPISSSSDSSPP. Over residues 49–63 the composition is skewed to pro residues; the sequence is NPQPKPKPAPPPPPS. Residues 85–343 form the Protein kinase domain; it reads YDLHKELGRG…AAEALEHPWM (259 aa). ATP contacts are provided by residues 91 to 99 and K114; that span reads LGRGQFGIT. D209 functions as the Proton acceptor in the catalytic mechanism. S249 is subject to Phosphoserine. Positions 348–378 are autoinhibitory domain; sequence ISDKPINSAVLVRMKQFRAMNKLKKLALKVI. EF-hand domains are found at residues 385-420, 421-456, 457-492, and 493-527; these read EEIKGLKQTFKNMDTDESGTITFDELRNGLHRLGSK, LTESEIKQLMEAADVDKSGTIDYIEFVTATMHRHRL, EKEENLIEAFKYFDKDRSGFITRDELKHSMTEYGMG, and DDATIDEVINDVDTDNDGRINYEEFVAMMRKGTTD. Residues D398, D400, S402, T404, E409, D434, D436, S438, T440, E445, D470, D472, S474, E481, D505, D507, D509, R511, and E516 each contribute to the Ca(2+) site.

Belongs to the protein kinase superfamily. Ser/Thr protein kinase family. CDPK subfamily.

It is found in the membrane. It carries out the reaction L-seryl-[protein] + ATP = O-phospho-L-seryl-[protein] + ADP + H(+). It catalyses the reaction L-threonyl-[protein] + ATP = O-phospho-L-threonyl-[protein] + ADP + H(+). Its activity is regulated as follows. Activated by calcium. Autophosphorylation may play an important role in the regulation of the kinase activity. In terms of biological role, may play a role in signal transduction pathways that involve calcium as a second messenger. This chain is Calcium-dependent protein kinase 29 (CPK29), found in Arabidopsis thaliana (Mouse-ear cress).